Reading from the N-terminus, the 203-residue chain is uncharacterized protein (203 aa).

Positions 1 to 23 are cleaved as a signal peptide; that stretch reads MKKIYKALISSLLLSTSINVAYA. Residues 24-87 enclose the SH3b domain; it reads ETQYVTENLS…ILNSDLSSTP (64 aa). A helical membrane pass occupies residues 167–189; the sequence is IAIQWFIYGGSVLGVGLLFGLLI.

The protein to E.coli YgiM.

Its subcellular location is the membrane. This is an uncharacterized protein from Haemophilus influenzae (strain ATCC 51907 / DSM 11121 / KW20 / Rd).